A 497-amino-acid chain; its full sequence is 3-octaprenyl-4-hydroxybenzoate carboxy-lyase (497 aa).

Asparagine 175 contacts Mn(2+). Prenylated FMN-binding positions include 178 to 180, 192 to 194, and 197 to 198; these read IYR, RWL, and RG. Residue glutamate 241 participates in Mn(2+) binding. Aspartate 290 (proton donor) is an active-site residue.

The protein belongs to the UbiD family. In terms of assembly, homohexamer. Requires prenylated FMN as cofactor. The cofactor is Mn(2+).

It localises to the cell membrane. It catalyses the reaction a 4-hydroxy-3-(all-trans-polyprenyl)benzoate + H(+) = a 2-(all-trans-polyprenyl)phenol + CO2. It functions in the pathway cofactor biosynthesis; ubiquinone biosynthesis. Catalyzes the decarboxylation of 3-octaprenyl-4-hydroxy benzoate to 2-octaprenylphenol, an intermediate step in ubiquinone biosynthesis. In Shigella sonnei (strain Ss046), this protein is 3-octaprenyl-4-hydroxybenzoate carboxy-lyase.